The following is a 147-amino-acid chain: UPF0306 protein YhbP (147 aa).

The protein belongs to the UPF0306 family.

This Escherichia coli O7:K1 (strain IAI39 / ExPEC) protein is UPF0306 protein YhbP.